The following is a 251-amino-acid chain: Tryptophan synthase alpha chain (251 aa).

Residues Glu-36 and Asp-47 each act as proton acceptor in the active site.

This sequence belongs to the TrpA family. As to quaternary structure, tetramer of two alpha and two beta chains.

The enzyme catalyses (1S,2R)-1-C-(indol-3-yl)glycerol 3-phosphate + L-serine = D-glyceraldehyde 3-phosphate + L-tryptophan + H2O. It participates in amino-acid biosynthesis; L-tryptophan biosynthesis; L-tryptophan from chorismate: step 5/5. The alpha subunit is responsible for the aldol cleavage of indoleglycerol phosphate to indole and glyceraldehyde 3-phosphate. The sequence is that of Tryptophan synthase alpha chain from Thermococcus kodakarensis (strain ATCC BAA-918 / JCM 12380 / KOD1) (Pyrococcus kodakaraensis (strain KOD1)).